A 258-amino-acid chain; its full sequence is Snake venom serine protease KN12 (258 aa).

A signal peptide spans 1 to 18 (MVLIRVLANLLILQLSYA). Residues 19-24 (QRSSEL) constitute a propeptide that is removed on maturation. The 225-residue stretch at 25-249 (VIGGDECNIN…HLDWIQNIIA (225 aa)) folds into the Peptidase S1 domain. Disulfide bonds link C31–C163, C50–C66, C98–C256, C142–C210, C174–C189, and C200–C225. H65 (charge relay system) is an active-site residue. N-linked (GlcNAc...) asparagine glycosylation occurs at N103. The active-site Charge relay system is D110. 4 N-linked (GlcNAc...) asparagine glycosylation sites follow: N121, N122, N154, and N170. The Charge relay system role is filled by S204. N-linked (GlcNAc...) asparagine glycosylation occurs at N251.

It belongs to the peptidase S1 family. Snake venom subfamily. In terms of assembly, monomer. As to expression, expressed by the venom gland.

The protein resides in the secreted. In terms of biological role, snake venom serine protease that may act in the hemostasis system of the prey. The polypeptide is Snake venom serine protease KN12 (Trimeresurus stejnegeri (Chinese green tree viper)).